The chain runs to 428 residues: Serine--tRNA ligase (428 aa).

235–237 (TAE) is a binding site for L-serine. Residue 266 to 268 (RSE) participates in ATP binding. Glu289 lines the L-serine pocket. Residue 353–356 (EISS) coordinates ATP. Residue Ser389 participates in L-serine binding.

The protein belongs to the class-II aminoacyl-tRNA synthetase family. Type-1 seryl-tRNA synthetase subfamily. As to quaternary structure, homodimer. The tRNA molecule binds across the dimer.

It is found in the cytoplasm. The enzyme catalyses tRNA(Ser) + L-serine + ATP = L-seryl-tRNA(Ser) + AMP + diphosphate + H(+). It carries out the reaction tRNA(Sec) + L-serine + ATP = L-seryl-tRNA(Sec) + AMP + diphosphate + H(+). The protein operates within aminoacyl-tRNA biosynthesis; selenocysteinyl-tRNA(Sec) biosynthesis; L-seryl-tRNA(Sec) from L-serine and tRNA(Sec): step 1/1. Catalyzes the attachment of serine to tRNA(Ser). Is also able to aminoacylate tRNA(Sec) with serine, to form the misacylated tRNA L-seryl-tRNA(Sec), which will be further converted into selenocysteinyl-tRNA(Sec). This Shewanella halifaxensis (strain HAW-EB4) protein is Serine--tRNA ligase.